The sequence spans 582 residues: ATP-dependent lipid A-core flippase (582 aa).

Transmembrane regions (helical) follow at residues 16–36 (LWPT…ALIL), 64–84 (LMWM…TSYI), 153–173 (IIGL…ILIV), 253–273 (PIIQ…ASFP), and 275–295 (VMDS…IALM). The ABC transmembrane type-1 domain maps to 28–310 (IVAGVALILN…LTNVNAQFQR (283 aa)). The ABC transporter domain occupies 342-578 (VEFRNVTFTY…RGVYAQLHKM (237 aa)). Residue 376–383 (GRSGSGKS) participates in ATP binding.

The protein belongs to the ABC transporter superfamily. Lipid exporter (TC 3.A.1.106) family. Homodimer.

Its subcellular location is the cell inner membrane. The catalysed reaction is ATP + H2O + lipid A-core oligosaccharideSide 1 = ADP + phosphate + lipid A-core oligosaccharideSide 2.. Functionally, involved in lipopolysaccharide (LPS) biosynthesis. Translocates lipid A-core from the inner to the outer leaflet of the inner membrane. Transmembrane domains (TMD) form a pore in the inner membrane and the ATP-binding domain (NBD) is responsible for energy generation. This Escherichia coli O6:K15:H31 (strain 536 / UPEC) protein is ATP-dependent lipid A-core flippase.